Consider the following 149-residue polypeptide: Transcriptional repressor NrdR (149 aa).

Residues 3-34 (CPFCSATDTKVIDSRLVADGHQVRRRRECVQC) fold into a zinc finger. Residues 49–139 (PRVVKQDGSR…VYRAFEDVSE (91 aa)) form the ATP-cone domain.

It belongs to the NrdR family. Requires Zn(2+) as cofactor.

Its function is as follows. Negatively regulates transcription of bacterial ribonucleotide reductase nrd genes and operons by binding to NrdR-boxes. The sequence is that of Transcriptional repressor NrdR from Shewanella halifaxensis (strain HAW-EB4).